The sequence spans 297 residues: MATSENDKRSKPSSLRSIIAGSTAGAVEIAITYPAEFAKTRSQLNRRLPDAKKLPWPPFGSQWYAGCTTLIIGNSLKAGIRFVAFDWLKSLLQDENGQISGPKTVIAGFGAGFTESLLAVTPFESIKTQLIDDRKSQNPRMRGFLHGSRVIFQERGVRGFFQGFVPTTARQAANSATRFSSYTMLKQMAQGYVAPGEKLGTASTFALGGIAGLITVYVTQPLDTVKTSRMQSLEASKNYKNSFVCAARIFKDEGIFTFWSGAVPRLARLIMSGGIVFTMYEKTMDALDGLDPERRYI.

Solcar repeat units lie at residues 12–91, 102–188, and 199–286; these read PSSL…LKSL, PKTV…LKQM, and LGTA…TMDA. The next 6 membrane-spanning stretches (helical) occupy residues 18-31, 61-81, 99-119, 160-180, 192-212, and 251-272; these read IIAGSTAGAVEIAI, SQWYAGCTTLIIGNSLKAGIR, ISGPKTVIAGFGAGFTESLLA, FFQGFVPTTARQAANSATRFS, YVAPGEKLGTASTFALGGIAG, and KDEGIFTFWSGAVPRLARLIMS.

It belongs to the mitochondrial carrier (TC 2.A.29) family.

The protein localises to the mitochondrion inner membrane. It carries out the reaction citrate(in) + H(+)(in) = citrate(out) + H(+)(out). Functionally, mitochondrial transporter that mediates citrate export from mitochondria to cytoplasm. Both ctpA, ctpB, and ctpD play important roles in citric acid transport across the mitochondrial membrane and function in a redundant manner. This chain is Mitochondrial citrate transporter A, found in Aspergillus niger (strain ATCC 1015 / CBS 113.46 / FGSC A1144 / LSHB Ac4 / NCTC 3858a / NRRL 328 / USDA 3528.7).